The sequence spans 531 residues: uncharacterized protein (531 aa).

Positions 1 to 28 (MNTKGIIAKLTAGALIANLLICPANTLA) are cleaved as a signal peptide. SLH domains are found at residues 29-85 (EKKT…QINK), 86-149 (QAKP…IGDL), and 150-210 (PTQF…SKRM). Residues 335 to 517 (IIIDPGHGGI…AAEAIYAGIL (183 aa)) form the MurNAc-LAA domain.

This sequence in the C-terminal section; belongs to the N-acetylmuramoyl-L-alanine amidase 3 family.

It is found in the secreted. The protein resides in the cell wall. It localises to the S-layer. This is an uncharacterized protein from Bacillus anthracis.